A 287-amino-acid chain; its full sequence is NAD-dependent protein deacylase sir-2.3 (287 aa).

A Deacetylase sirtuin-type domain is found at 10–287 (TELCENSLKK…YRISDVLKEM (278 aa)). Residues 35-55 (GAGI…VGLY) and 116-119 (QNVD) each bind NAD(+). Residue His134 is the Proton acceptor of the active site. Positions 142, 145, 196, and 199 each coordinate Zn(2+). NAD(+) contacts are provided by residues 236-238 (GTS), 262-264 (NIG), and Ile280.

This sequence belongs to the sirtuin family. Class II subfamily. In terms of assembly, interacts with pyc-1, pcca-1 and mccc-1. It depends on Zn(2+) as a cofactor. In terms of tissue distribution, ubiquitously expressed with high expression in the pharynx, body wall muscles and gonad. Strong expression in a subset of non-neuronal cells in the head.

The protein resides in the mitochondrion matrix. It is found in the mitochondrion. The catalysed reaction is N(6)-acetyl-L-lysyl-[protein] + NAD(+) + H2O = 2''-O-acetyl-ADP-D-ribose + nicotinamide + L-lysyl-[protein]. NAD-dependent protein deacylase. Catalyzes the NAD-dependent hydrolysis of acyl groups from lysine residues. Plays a role in oxidative stress resistance. Might promote neuronal cell death under ischemic conditions and cell death in touch neurons induced by mec-4 channel hyperactivation, possibly downstream of the insulin-like receptor daf-2. Might attenuate the reactive oxygen species (ROS) scavenging system, that eliminates ROS in ischemic conditions, under dietary deprivation and when glycolysis is blocked. The chain is NAD-dependent protein deacylase sir-2.3 (sir-2.3) from Caenorhabditis elegans.